The following is an 87-amino-acid chain: U3-theraphotoxin-Hhn1q (87 aa).

The N-terminal stretch at 1-24 (MVNMKASMFLTFAGLVLLFVVCYA) is a signal peptide. Residues 25–52 (SESEEKEFPKEMLSSIFAVDNDFKQEER) constitute a propeptide that is removed on maturation. 3 disulfides stabilise this stretch: C54–C67, C61–C72, and C66–C79.

The protein belongs to the neurotoxin 10 (Hwtx-1) family. 51 (Hntx-8) subfamily. Hntx-8 sub-subfamily. Expressed by the venom gland.

The protein resides in the secreted. Its function is as follows. Ion channel inhibitor. The polypeptide is U3-theraphotoxin-Hhn1q (Cyriopagopus hainanus (Chinese bird spider)).